The primary structure comprises 404 residues: Glucose-1-phosphate adenylyltransferase 2 (404 aa).

Alpha-D-glucose 1-phosphate-binding positions include Y97, G162, 177–178, and S195; that span reads EK.

It belongs to the bacterial/plant glucose-1-phosphate adenylyltransferase family. Homotetramer.

The catalysed reaction is alpha-D-glucose 1-phosphate + ATP + H(+) = ADP-alpha-D-glucose + diphosphate. It functions in the pathway glycan biosynthesis; glycogen biosynthesis. Its function is as follows. Involved in the biosynthesis of ADP-glucose, a building block required for the elongation reactions to produce glycogen. Catalyzes the reaction between ATP and alpha-D-glucose 1-phosphate (G1P) to produce pyrophosphate and ADP-Glc. The chain is Glucose-1-phosphate adenylyltransferase 2 from Vibrio vulnificus (strain CMCP6).